The chain runs to 352 residues: D-alanine--D-alanine ligase A (352 aa).

The region spanning 138–341 is the ATP-grasp domain; the sequence is KRMVQSAGLV…PPKLVGALVE (204 aa). 165–220 lines the ATP pocket; it reads ECLGSSTLFVKPATSGSSIGVSRVSNALEYAAAFAIAAREDTKVLVEAAVCGREIE. Residues Asp-295, Glu-308, and Asn-310 each contribute to the Mg(2+) site.

This sequence belongs to the D-alanine--D-alanine ligase family. Mg(2+) is required as a cofactor. Requires Mn(2+) as cofactor.

It is found in the cytoplasm. The catalysed reaction is 2 D-alanine + ATP = D-alanyl-D-alanine + ADP + phosphate + H(+). It functions in the pathway cell wall biogenesis; peptidoglycan biosynthesis. In terms of biological role, cell wall formation. This Pseudomonas putida (strain ATCC 47054 / DSM 6125 / CFBP 8728 / NCIMB 11950 / KT2440) protein is D-alanine--D-alanine ligase A.